The primary structure comprises 473 residues: MSFSSLRRALVFLGACSSALASIGPVTELDIVNKVIAPDGVARDTVLAGGTFPGPLITGKKGDNFRINVVDKLVNQTMLTSTTIHWHGMFQHTTNWADGPAFVTQCPITTGDDFLYNFRVPDQTGTYWYHSHLALQYCDGLRGPLVIYDPHDPQAYLYDVDDESTVITLADWYHTPAPLLPPAATLINGLGRWPGNPTADLAVIEVQHGKRYRFRLVSTSCDPNYNFTIDGHTMTIIEADGQNTQPHQVDGLQIFAAQRYSFVLNANQAVNNYWIRANPNRANTTGFANGINSAILRYKGAPIKEPTTNQTTIRNFLWETDLHPLTDPRAPGLPFKGGVDHALNLNLTFNGSEFFINDAPFVPPTVPVLLQILNGTLDANDLLPPGSVYNLPPDSTIELSIPGGVTGGPHPFHLHGTDNPGPWFLHCHIDFHLQAGLAIVFAEDAQDTKLVNPVPEDWNKLCPTFDKAMNITV.

The N-terminal stretch at 1–21 (MSFSSLRRALVFLGACSSALA) is a signal peptide. Plastocyanin-like domains are found at residues 23-148 (IGPV…LVIY) and 160-298 (VDDE…ILRY). N-linked (GlcNAc...) asparagine glycosylation is present at Asn-75. Positions 85, 87, 130, and 132 each coordinate Cu cation. 2 disulfides stabilise this stretch: Cys-106–Cys-462 and Cys-138–Cys-221. 6 N-linked (GlcNAc...) asparagine glycosylation sites follow: Asn-226, Asn-283, Asn-309, Asn-346, Asn-350, and Asn-374. In terms of domain architecture, Plastocyanin-like 3 spans 365 to 444 (TVPVLLQILN…AGLAIVFAED (80 aa)). The Cu cation site is built by His-410, His-413, His-415, His-426, Cys-427, His-428, and His-432. Asn-470 carries an N-linked (GlcNAc...) asparagine glycan.

Belongs to the multicopper oxidase family. As to quaternary structure, homodimer. The cofactor is Cu cation.

The protein resides in the secreted. The enzyme catalyses 4 hydroquinone + O2 = 4 benzosemiquinone + 2 H2O. Functionally, lignin degradation and detoxification of lignin-derived products. This Trametes villosa (White-rot fungus) protein is Laccase-3 (LCC3).